The sequence spans 449 residues: Signal recognition particle protein (449 aa).

Residues 109–116, 191–195, and 249–252 contribute to the GTP site; these read GLQGGGKT, DTAGR, and SRID.

This sequence belongs to the GTP-binding SRP family. SRP54 subfamily. As to quaternary structure, part of the signal recognition particle protein translocation system, which is composed of SRP and FtsY. SRP is a ribonucleoprotein composed of Ffh and a 4.5S RNA molecule.

The protein resides in the cytoplasm. The enzyme catalyses GTP + H2O = GDP + phosphate + H(+). Functionally, involved in targeting and insertion of nascent membrane proteins into the cytoplasmic membrane. Binds to the hydrophobic signal sequence of the ribosome-nascent chain (RNC) as it emerges from the ribosomes. The SRP-RNC complex is then targeted to the cytoplasmic membrane where it interacts with the SRP receptor FtsY. Interaction with FtsY leads to the transfer of the RNC complex to the Sec translocase for insertion into the membrane, the hydrolysis of GTP by both Ffh and FtsY, and the dissociation of the SRP-FtsY complex into the individual components. This is Signal recognition particle protein from Rickettsia typhi (strain ATCC VR-144 / Wilmington).